The primary structure comprises 392 residues: Lipid-A-disaccharide synthase (392 aa).

The protein belongs to the LpxB family.

The catalysed reaction is a lipid X + a UDP-2-N,3-O-bis[(3R)-3-hydroxyacyl]-alpha-D-glucosamine = a lipid A disaccharide + UDP + H(+). It functions in the pathway bacterial outer membrane biogenesis; LPS lipid A biosynthesis. Its function is as follows. Condensation of UDP-2,3-diacylglucosamine and 2,3-diacylglucosamine-1-phosphate to form lipid A disaccharide, a precursor of lipid A, a phosphorylated glycolipid that anchors the lipopolysaccharide to the outer membrane of the cell. This Bradyrhizobium diazoefficiens (strain JCM 10833 / BCRC 13528 / IAM 13628 / NBRC 14792 / USDA 110) protein is Lipid-A-disaccharide synthase.